Reading from the N-terminus, the 55-residue chain is MPQLELISWFFNFLLAWFFLFIVVTILLKINFPSTNYITVTHPQKLNIFNNWLWT.

Residues 7 to 28 (ISWFFNFLLAWFFLFIVVTILL) form a helical membrane-spanning segment.

This sequence belongs to the ATPase protein 8 family. As to quaternary structure, F-type ATPases have 2 components, CF(1) - the catalytic core - and CF(0) - the membrane proton channel.

Its subcellular location is the mitochondrion membrane. Mitochondrial membrane ATP synthase (F(1)F(0) ATP synthase or Complex V) produces ATP from ADP in the presence of a proton gradient across the membrane which is generated by electron transport complexes of the respiratory chain. F-type ATPases consist of two structural domains, F(1) - containing the extramembraneous catalytic core and F(0) - containing the membrane proton channel, linked together by a central stalk and a peripheral stalk. During catalysis, ATP synthesis in the catalytic domain of F(1) is coupled via a rotary mechanism of the central stalk subunits to proton translocation. Part of the complex F(0) domain. Minor subunit located with subunit a in the membrane. The polypeptide is ATP synthase protein 8 (MT-ATP8) (Pisaster ochraceus (Ochre sea star)).